Consider the following 387-residue polypeptide: Alkanesulfonate monooxygenase (387 aa).

It belongs to the SsuD family.

It catalyses the reaction an alkanesulfonate + FMNH2 + O2 = an aldehyde + FMN + sulfite + H2O + 2 H(+). Its function is as follows. Catalyzes the desulfonation of aliphatic sulfonates. The protein is Alkanesulfonate monooxygenase of Ralstonia nicotianae (strain ATCC BAA-1114 / GMI1000) (Ralstonia solanacearum).